The primary structure comprises 110 residues: Endoribonuclease SymE (110 aa).

A SpoVT-AbrB domain is found at 29 to 74 (SRYPDYTRIPALTMKGQWLEAAGFATGTEVDVRVMNGCIVLTAQQP).

Belongs to the SymE family.

The protein localises to the cytoplasm. Involved in the degradation and recycling of damaged RNA. It is itself a target for degradation by the ATP-dependent protease Lon. In Salmonella typhi, this protein is Endoribonuclease SymE.